A 481-amino-acid chain; its full sequence is MNYLPMMIVFPLIMAIIMNLLHGKEKAVKYITFITAAILIILPFISQYGYYYFGGHGVVNGWVSGIAYLYNPAKQAIIVTLSLIASLVLITGMGEKLKNNMFVTLSLMGFASIAAIVLADDIFNLYVFFEIVSIVQAGLVFLSGTEEAYKAGLRYMIMGNVAAALMLLGIAFLLASTGTLNITDMKHYLLVDNPMIYGGLLLLIVGLAYGAGLPPFHNVKADLYARSKGFISAMLQTYSKFVLVGLMIIILKLFNGLDYFASAHAVLIALGVLAMVFGVVMALLQSDYKKLLAYHAISQGGYVATGLALGTPLGIVAGIFHAINHVIYKSALFLGAYIVSCKRGSNLHKLGGLLPLMPSVAFMVLCAKLAISGIPPFNGFQSKWMLAQAAMQVNMPEIAIIMIIVSIGTFVSMMKAFYLIYLKPVDEETLKEYQNKEVPKLAVFSLFVLTALCIIIGLYPDIVTNYLWDYAKELGVNYYLK.

13 helical membrane-spanning segments follow: residues 3-23, 33-53, 75-95, 99-119, 122-142, 155-175, 196-216, 241-261, 264-284, 303-323, 351-371, 400-420, and 443-463; these read YLPM…LLHG, FITA…YYYF, QAII…GMGE, NNMF…IVLA, IFNL…LVFL, YMIM…FLLA, IYGG…LPPF, FVLV…DYFA, HAVL…MALL, VATG…FHAI, GGLL…KLAI, IIMI…FYLI, and VFSL…PDIV.

The protein resides in the cell membrane. This is an uncharacterized protein from Methanocaldococcus jannaschii (strain ATCC 43067 / DSM 2661 / JAL-1 / JCM 10045 / NBRC 100440) (Methanococcus jannaschii).